We begin with the raw amino-acid sequence, 159 residues long: Ribosomal RNA large subunit methyltransferase H (159 aa).

Residues glycine 108 and 127–132 (FSKMTF) contribute to the S-adenosyl-L-methionine site.

Belongs to the RNA methyltransferase RlmH family. As to quaternary structure, homodimer.

Its subcellular location is the cytoplasm. The enzyme catalyses pseudouridine(1915) in 23S rRNA + S-adenosyl-L-methionine = N(3)-methylpseudouridine(1915) in 23S rRNA + S-adenosyl-L-homocysteine + H(+). Functionally, specifically methylates the pseudouridine at position 1915 (m3Psi1915) in 23S rRNA. This Clostridium beijerinckii (strain ATCC 51743 / NCIMB 8052) (Clostridium acetobutylicum) protein is Ribosomal RNA large subunit methyltransferase H.